The primary structure comprises 33 residues: Protamine TP14 (33 aa).

The tract at residues 1–33 (MPRRRRSSRPPVRRRRRPRVSRRRRRRGGRRRR) is disordered.

As to expression, testis.

Its subcellular location is the nucleus. It is found in the chromosome. In terms of biological role, protamines substitute for histones in the chromatin of sperm during the haploid phase of spermatogenesis. They compact sperm DNA into a highly condensed, stable and inactive complex. In Oncorhynchus mykiss (Rainbow trout), this protein is Protamine TP14.